The primary structure comprises 322 residues: Malate dehydrogenase (322 aa).

NAD(+) contacts are provided by residues 10–15 and Asp-34; that span reads GSGQIG. Substrate contacts are provided by Arg-83 and Arg-89. NAD(+) is bound by residues Asn-96 and 119–121; that span reads ITN. Substrate-binding residues include Asn-121 and Arg-152. His-176 functions as the Proton acceptor in the catalytic mechanism.

This sequence belongs to the LDH/MDH superfamily. MDH type 3 family.

It carries out the reaction (S)-malate + NAD(+) = oxaloacetate + NADH + H(+). Its function is as follows. Catalyzes the reversible oxidation of malate to oxaloacetate. The sequence is that of Malate dehydrogenase from Rhodopseudomonas palustris (strain HaA2).